Here is a 390-residue protein sequence, read N- to C-terminus: Outer membrane protein assembly factor BamB (390 aa).

The N-terminal stretch at 1 to 25 is a signal peptide; it reads MPVLRDRIPRRGFFLGLALLAALSG. Cys26 carries the N-palmitoyl cysteine lipid modification. The S-diacylglycerol cysteine moiety is linked to residue Cys26.

Belongs to the BamB family. As to quaternary structure, part of the Bam complex.

The protein localises to the cell outer membrane. Its function is as follows. Part of the outer membrane protein assembly complex, which is involved in assembly and insertion of beta-barrel proteins into the outer membrane. In Marinobacter adhaerens (strain DSM 23420 / HP15), this protein is Outer membrane protein assembly factor BamB.